A 399-amino-acid chain; its full sequence is La protein 2 (399 aa).

The HTH La-type RNA-binding domain maps to 3 to 106 (SSFNEETAKK…GRGTKLSKPE (104 aa)). The 78-residue stretch at 115-192 (RTLAASPFEY…ADLVLIPKSD (78 aa)) folds into the RRM domain. One can recognise a xRRM domain in the interval 269–399 (SLCKDNTDQL…QPTKKARKEP (131 aa)). A disordered region spans residues 367–399 (AELEGGKEGHKKEKGKDECFENVQPTKKARKEP). Positions 370–385 (EGGKEGHKKEKGKDEC) are enriched in basic and acidic residues.

In terms of tissue distribution, expressed ubiquitously (at protein level).

The protein resides in the nucleus. Its subcellular location is the nucleoplasm. It is found in the nucleolus. Its function is as follows. Binds to the 3' poly(U) terminus of nascent RNA polymerase III transcripts, protecting them from exonuclease digestion and facilitating their folding and maturation. The protein is La protein 2 (LA2) of Arabidopsis thaliana (Mouse-ear cress).